A 376-amino-acid polypeptide reads, in one-letter code: Ribosomal RNA large subunit methyltransferase G (376 aa).

This sequence belongs to the methyltransferase superfamily. RlmG family.

It localises to the cytoplasm. The catalysed reaction is guanosine(1835) in 23S rRNA + S-adenosyl-L-methionine = N(2)-methylguanosine(1835) in 23S rRNA + S-adenosyl-L-homocysteine + H(+). Functionally, specifically methylates the guanine in position 1835 (m2G1835) of 23S rRNA. This chain is Ribosomal RNA large subunit methyltransferase G, found in Klebsiella pneumoniae subsp. pneumoniae (strain ATCC 700721 / MGH 78578).